Reading from the N-terminus, the 189-residue chain is UPF0301 protein PP_4995 (189 aa).

The protein belongs to the UPF0301 (AlgH) family.

This chain is UPF0301 protein PP_4995, found in Pseudomonas putida (strain ATCC 47054 / DSM 6125 / CFBP 8728 / NCIMB 11950 / KT2440).